The sequence spans 120 residues: Aspartate 1-decarboxylase (120 aa).

Serine 25 acts as the Schiff-base intermediate with substrate; via pyruvic acid in catalysis. Serine 25 carries the pyruvic acid (Ser) modification. Residue threonine 57 participates in substrate binding. The Proton donor role is filled by tyrosine 58. Position 73–75 (73–75 (GAA)) interacts with substrate.

Belongs to the PanD family. In terms of assembly, heterooctamer of four alpha and four beta subunits. Requires pyruvate as cofactor. Is synthesized initially as an inactive proenzyme, which is activated by self-cleavage at a specific serine bond to produce a beta-subunit with a hydroxyl group at its C-terminus and an alpha-subunit with a pyruvoyl group at its N-terminus.

Its subcellular location is the cytoplasm. It carries out the reaction L-aspartate + H(+) = beta-alanine + CO2. Its pathway is cofactor biosynthesis; (R)-pantothenate biosynthesis; beta-alanine from L-aspartate: step 1/1. Catalyzes the pyruvoyl-dependent decarboxylation of aspartate to produce beta-alanine. In Deinococcus deserti (strain DSM 17065 / CIP 109153 / LMG 22923 / VCD115), this protein is Aspartate 1-decarboxylase.